The sequence spans 357 residues: Geranylgeranyl pyrophosphate synthase, chloroplastic (357 aa).

The N-terminal 40 residues, 1–40 (MRSNLCHPLKNQLPISFFLSGTIRKPIFSCSRLSISAIIT), are a transit peptide targeting the chloroplast. Residues lysine 106, arginine 109, and histidine 138 each contribute to the isopentenyl diphosphate site. Aspartate 145 and aspartate 151 together coordinate Mg(2+). Arginine 156 is a binding site for dimethylallyl diphosphate. Arginine 157 is a binding site for isopentenyl diphosphate. Residues lysine 242, threonine 243, glutamine 280, lysine 297, and lysine 307 each coordinate dimethylallyl diphosphate.

It belongs to the FPP/GGPP synthase family. Mg(2+) is required as a cofactor.

It is found in the plastid. Its subcellular location is the chloroplast. The catalysed reaction is isopentenyl diphosphate + dimethylallyl diphosphate = (2E)-geranyl diphosphate + diphosphate. It carries out the reaction isopentenyl diphosphate + (2E)-geranyl diphosphate = (2E,6E)-farnesyl diphosphate + diphosphate. It catalyses the reaction isopentenyl diphosphate + (2E,6E)-farnesyl diphosphate = (2E,6E,10E)-geranylgeranyl diphosphate + diphosphate. It participates in isoprenoid biosynthesis; farnesyl diphosphate biosynthesis; farnesyl diphosphate from geranyl diphosphate and isopentenyl diphosphate: step 1/1. It functions in the pathway isoprenoid biosynthesis; geranyl diphosphate biosynthesis; geranyl diphosphate from dimethylallyl diphosphate and isopentenyl diphosphate: step 1/1. The protein operates within isoprenoid biosynthesis; geranylgeranyl diphosphate biosynthesis; geranylgeranyl diphosphate from farnesyl diphosphate and isopentenyl diphosphate: step 1/1. In terms of biological role, catalyzes the trans-addition of the three molecules of IPP onto DMAPP to form geranylgeranyl pyrophosphate. The chain is Geranylgeranyl pyrophosphate synthase, chloroplastic (GGPS1) from Catharanthus roseus (Madagascar periwinkle).